The primary structure comprises 336 residues: Probable RNA methyltransferase Anae109_4379 (336 aa).

Residue glutamate 86 is the Proton acceptor of the active site. Residues 93-322 (FDTHHTVCLS…PIVRRYSGGQ (230 aa)) enclose the Radical SAM core domain. Cysteine 100 and cysteine 328 are joined by a disulfide. Residues cysteine 107, cysteine 111, and cysteine 114 each contribute to the [4Fe-4S] cluster site. S-adenosyl-L-methionine-binding positions include 154–155 (GE), serine 186, and 209–211 (SLN). Cysteine 328 (S-methylcysteine intermediate) is an active-site residue.

This sequence belongs to the radical SAM superfamily. RlmN family. Requires [4Fe-4S] cluster as cofactor.

The protein localises to the cytoplasm. The protein is Probable RNA methyltransferase Anae109_4379 of Anaeromyxobacter sp. (strain Fw109-5).